Reading from the N-terminus, the 384-residue chain is D-galactosamine-6-phosphate deaminase AgaS (384 aa).

2 SIS domains span residues 45–197 and 215–364; these read LEPL…SQTF and SEGV…PDTP.

It belongs to the SIS family. AgaS subfamily.

It catalyses the reaction D-galactosamine 6-phosphate + H2O = D-tagatopyranose 1-phosphate + NH4(+). Catalyzes the isomerization-deamination of galactosamine 6-phosphate to form tagatofuranose 6-phosphate and ammonium ion. The sequence is that of D-galactosamine-6-phosphate deaminase AgaS from Escherichia coli.